We begin with the raw amino-acid sequence, 126 residues long: Histone H2B type 3-B (126 aa).

Residues 1-12 (MPDPSKSAPAPK) are compositionally biased toward low complexity. The tract at residues 1-35 (MPDPSKSAPAPKKGSKKAVTKAQKKDGKKRKRGRK) is disordered. Pro2 carries the N-acetylproline modification. The residue at position 6 (Lys6) is an N6-(2-hydroxyisobutyryl)lysine; alternate. An N6-(beta-hydroxybutyryl)lysine; alternate modification is found at Lys6. An N6-acetyllysine; alternate modification is found at Lys6. Lys6 is modified (N6-butyryllysine; alternate). Lys6 bears the N6-crotonyllysine; alternate mark. Lys6 is subject to N6-lactoyllysine; alternate. Lys6 participates in a covalent cross-link: Glycyl lysine isopeptide (Lys-Gly) (interchain with G-Cter in SUMO2); alternate. Ser7 is modified (ADP-ribosylserine). An N6-(beta-hydroxybutyryl)lysine; alternate modification is found at Lys12. N6-acetyllysine; alternate occurs at positions 12 and 13. Lys12 and Lys13 each carry N6-crotonyllysine; alternate. The residue at position 12 (Lys12) is an N6-lactoyllysine; alternate. Residue Lys13 is modified to N6-(2-hydroxyisobutyryl)lysine; alternate. Phosphoserine; by STK4/MST1 is present on Ser15. 4 positions are modified to N6-acetyllysine; alternate: Lys16, Lys17, Lys21, and Lys24. Lys16, Lys17, Lys21, and Lys24 each carry N6-crotonyllysine; alternate. N6-lactoyllysine; alternate is present on residues Lys16, Lys17, Lys21, and Lys24. Lys17 and Lys21 each carry N6-(beta-hydroxybutyryl)lysine; alternate. Lys17 bears the N6-glutaryllysine; alternate mark. Residues Lys21 and Lys24 each carry the N6-(2-hydroxyisobutyryl)lysine; alternate modification. An N6-butyryllysine; alternate modification is found at Lys21. Lys21 is covalently cross-linked (Glycyl lysine isopeptide (Lys-Gly) (interchain with G-Cter in SUMO2); alternate). Lys25 carries the N6-(2-hydroxyisobutyryl)lysine modification. Lys35 carries the N6-(2-hydroxyisobutyryl)lysine; alternate modification. Residue Lys35 is modified to N6-(beta-hydroxybutyryl)lysine; alternate. The residue at position 35 (Lys35) is an N6-crotonyllysine; alternate. At Lys35 the chain carries N6-glutaryllysine; alternate. Lys35 is subject to N6-succinyllysine; alternate. Lys35 participates in a covalent cross-link: Glycyl lysine isopeptide (Lys-Gly) (interchain with G-Cter in ubiquitin); alternate. Glu36 is subject to PolyADP-ribosyl glutamic acid. Phosphoserine; by AMPK is present on Ser37. Lys44, Lys47, and Lys58 each carry N6-(2-hydroxyisobutyryl)lysine; alternate. Lys44 bears the N6-lactoyllysine; alternate mark. Residues Lys44 and Lys47 each carry the N6-glutaryllysine; alternate modification. Residue Lys47 is modified to N6-methyllysine; alternate. Lys58 carries the N6,N6-dimethyllysine; alternate modification. Dimethylated arginine is present on Arg80. Residue Lys86 is modified to N6-(2-hydroxyisobutyryl)lysine; alternate. Lys86 carries the N6-(beta-hydroxybutyryl)lysine; alternate modification. Lys86 is modified (N6-acetyllysine; alternate). Lys86 bears the N6-lactoyllysine; alternate mark. Lys86 is subject to N6,N6,N6-trimethyllysine; alternate. An omega-N-methylarginine mark is found at Arg87 and Arg93. Position 109 is an N6-(2-hydroxyisobutyryl)lysine; alternate (Lys109). Lys109 is modified (N6-lactoyllysine; alternate). N6-glutaryllysine; alternate is present on Lys109. N6-methyllysine; alternate is present on Lys109. A glycan (O-linked (GlcNAc) serine) is linked at Ser113. Phosphothreonine is present on Thr116. N6-(2-hydroxyisobutyryl)lysine; alternate is present on residues Lys117 and Lys121. Residues Lys117 and Lys121 each carry the N6-(beta-hydroxybutyryl)lysine; alternate modification. An N6-lactoyllysine; alternate mark is found at Lys117 and Lys121. N6-glutaryllysine; alternate occurs at positions 117 and 121. N6-succinyllysine; alternate occurs at positions 117 and 121. The residue at position 117 (Lys117) is an N6-malonyllysine; alternate. Lys117 carries the N6-methylated lysine; alternate modification. Lys121 is covalently cross-linked (Glycyl lysine isopeptide (Lys-Gly) (interchain with G-Cter in ubiquitin); alternate).

Belongs to the histone H2B family. In terms of assembly, the nucleosome is a histone octamer containing two molecules each of H2A, H2B, H3 and H4 assembled in one H3-H4 heterotetramer and two H2A-H2B heterodimers. The octamer wraps approximately 147 bp of DNA. In terms of processing, monoubiquitination at Lys-35 (H2BK34Ub) by the MSL1/MSL2 dimer is required for histone H3 'Lys-4' (H3K4me) and 'Lys-79' (H3K79me) methylation and transcription activation at specific gene loci, such as HOXA9 and MEIS1 loci. Similarly, monoubiquitination at Lys-121 (H2BK120Ub) by the RNF20/40 complex gives a specific tag for epigenetic transcriptional activation and is also prerequisite for histone H3 'Lys-4' and 'Lys-79' methylation. It also functions cooperatively with the FACT dimer to stimulate elongation by RNA polymerase II. H2BK120Ub also acts as a regulator of mRNA splicing: deubiquitination by USP49 is required for efficient cotranscriptional splicing of a large set of exons. Phosphorylation at Ser-37 (H2BS36ph) by AMPK in response to stress promotes transcription. Phosphorylated on Ser-15 (H2BS14ph) by STK4/MST1 during apoptosis; which facilitates apoptotic chromatin condensation. Also phosphorylated on Ser-15 in response to DNA double strand breaks (DSBs), and in correlation with somatic hypermutation and immunoglobulin class-switch recombination. Post-translationally, glcNAcylation at Ser-113 promotes monoubiquitination of Lys-121. It fluctuates in response to extracellular glucose, and associates with transcribed genes. In terms of processing, ADP-ribosylated by PARP1 or PARP2 on Ser-7 (H2BS6ADPr) in response to DNA damage. H2BS6ADPr promotes recruitment of CHD1L. Poly ADP-ribosylation on Glu-36 (H2BE35ADPr) by PARP1 regulates adipogenesis: it inhibits phosphorylation at Ser-37 (H2BS36ph), thereby blocking expression of pro-adipogenetic genes. Crotonylation (Kcr) is specifically present in male germ cells and marks testis-specific genes in post-meiotic cells, including X-linked genes that escape sex chromosome inactivation in haploid cells. Crotonylation marks active promoters and enhancers and confers resistance to transcriptional repressors. It is also associated with post-meiotically activated genes on autosomes. Post-translationally, lactylated in macrophages by EP300/P300 by using lactoyl-CoA directly derived from endogenous or exogenous lactate, leading to stimulates gene transcription.

The protein localises to the nucleus. It is found in the chromosome. Functionally, core component of nucleosome. Nucleosomes wrap and compact DNA into chromatin, limiting DNA accessibility to the cellular machineries which require DNA as a template. Histones thereby play a central role in transcription regulation, DNA repair, DNA replication and chromosomal stability. DNA accessibility is regulated via a complex set of post-translational modifications of histones, also called histone code, and nucleosome remodeling. The polypeptide is Histone H2B type 3-B (Homo sapiens (Human)).